The sequence spans 288 residues: Syntaxin-1A (288 aa).

Residues 1 to 265 lie on the Cytoplasmic side of the membrane; that stretch reads MKDRTQELRT…KYQSKARRKK (265 aa). Phosphoserine occurs at positions 14, 64, and 95. A coiled-coil region spans residues 68–109; it reads DEKTKEELEELMSDIKKTANKVRSKLKSIEQSIEQEEGLNRS. Residue serine 188 is modified to Phosphoserine; by DAPK1. The t-SNARE coiled-coil homology domain maps to 192–254; sequence LSEIETRHSE…ERAVSDTKKA (63 aa). Residues lysine 252, lysine 253, and lysine 256 each participate in a glycyl lysine isopeptide (Lys-Gly) (interchain with G-Cter in SUMO) cross-link. A helical; Anchor for type IV membrane protein membrane pass occupies residues 266–286; sequence IMIIICCVILGIVIASTVGGI. The Extracellular segment spans residues 287 to 288; the sequence is FA.

It belongs to the syntaxin family. In terms of assembly, part of the SNARE core complex containing SNAP25, VAMP2 and STX1A; this complex constitutes the basic catalytic machinery of the complex neurotransmitter release apparatus. The SNARE complex interacts with CPLX1. Interacts with STXBP1. The interaction with STXBP1 promotes assembly of the SNARE complex. Interacts (via C-terminus) with KCNB1 (via C-terminus); the interaction increases in a calcium-dependent manner and induces a pore-independent enhancement of exocytosis in neuroendocrine cells, chromaffin cells, pancreatic beta cells and from the soma of dorsal root ganglia (DRG) neurons. Interacts with SYTL4. Interacts with STXBP6. Interacts with PLCL1 (via C2 domain). Interacts with OTOF. Interacts with LGI3. Interacts (via the H3 domain) with SLC6A4 (via the N-terminus); this interaction regulates SLC4A6 channel conductance in thalamocortical neurons. Interacts with SYT6 and SYT8; the interaction is Ca(2+)-dependent. Interacts with VAMP8. Interacts with SNAP23. Interacts with VAPA and SYBU. Interacts with PRRT2. Interacts with SEPT8. Interacts with STXBP5L. Interacts with synaptotagmin-1/SYT1. Interacts with SEPTIN5; in the cerebellar cortex. Interacts with SEPTIN4; in the striatum. In terms of processing, phosphorylated by CK2. Phosphorylation at Ser-188 by DAPK1 significantly decreases its interaction with STXBP1. Sumoylated, sumoylation is required for regulation of synaptic vesicle endocytosis. Highly expressed in embryonic spinal cord and ganglia and in adult cerebellum and cerebral cortex. As to expression, expressed in heart, liver, fat, skeletal muscle, kidney and brain.

Its subcellular location is the cytoplasmic vesicle. The protein resides in the secretory vesicle. It is found in the synaptic vesicle membrane. It localises to the synapse. The protein localises to the synaptosome. Its subcellular location is the cell membrane. The protein resides in the secreted. Its function is as follows. Plays an essential role in hormone and neurotransmitter calcium-dependent exocytosis and endocytosis. Part of the SNARE (Soluble NSF Attachment Receptor) complex composed of SNAP25, STX1A and VAMP2 which mediates the fusion of synaptic vesicles with the presynaptic plasma membrane. STX1A and SNAP25 are localized on the plasma membrane while VAMP2 resides in synaptic vesicles. The pairing of the three SNAREs from the N-terminal SNARE motifs to the C-terminal anchors leads to the formation of the SNARE complex, which brings membranes into close proximity and results in final fusion. Participates in the calcium-dependent regulation of acrosomal exocytosis in sperm. Also plays an important role in the exocytosis of hormones such as insulin or glucagon-like peptide 1 (GLP-1). In Homo sapiens (Human), this protein is Syntaxin-1A (STX1A).